The following is a 530-amino-acid chain: Calnexin homolog 1 (530 aa).

An N-terminal signal peptide occupies residues 1–20 (MRQRQLFSVFLLLLAFVSFQ). Topologically, residues 21–466 (KLCYCDDQTV…EKAEQQPNLT (446 aa)) are lumenal. The Ca(2+) site is built by S34 and D65. Cysteines 108 and 143 form a disulfide. Y112, K114, Y134, and D141 together coordinate an alpha-D-glucoside. Residues 216 to 315 (ALIPAKTIPD…KCEAAPGCGE (100 aa)) are disordered. Residues 223 to 356 (IPDPEDKKPE…RDIPNPDYFE (134 aa)) form a p domain (Extended arm) region. A compositionally biased stretch (basic and acidic residues) spans 224–240 (PDPEDKKPEDWDERAKI). Tandem repeats lie at residues 225-236 (DPEDKKPEDWDE), 242-253 (DPNAVKPEDWDE), 261-272 (DEEAEKPEGWLD), 280-291 (DPEATKPEDWDD), and 295-305 (GMWEAPKIDNP). 4 X approximate repeats stretches follow at residues 225-291 (DPED…DWDD) and 295-352 (GMWE…IPNP). Positions 250–281 (DWDEDAPMEIEDEEAEKPEGWLDDEPEEVDDP) are enriched in acidic residues. An intrachain disulfide couples C307 to C313. 3 repeat units span residues 314-324 (GEWKRPMKRNP), 328-338 (GKWSSPLIDNP), and 342-352 (GIWKPRDIPNP). An alpha-D-glucoside is bound at residue E371. Position 382 (D382) interacts with Ca(2+). N464 carries N-linked (GlcNAc...) asparagine glycosylation. A helical transmembrane segment spans residues 467 to 487 (IGVLVAIVVVFFSLFLKLIFG). Residues 488–530 (GKKAAAPVEKKKPEVAESSKSGDEAEKKEETAAPRKRQPRRDN) lie on the Cytoplasmic side of the membrane. Residues 490–530 (KAAAPVEKKKPEVAESSKSGDEAEKKEETAAPRKRQPRRDN) form a disordered region. Residues 495–520 (VEKKKPEVAESSKSGDEAEKKEETAA) are compositionally biased toward basic and acidic residues. S508 carries the phosphoserine modification. Residues 521 to 530 (PRKRQPRRDN) are compositionally biased toward basic residues.

This sequence belongs to the calreticulin family.

The protein localises to the endoplasmic reticulum membrane. Functionally, calcium-binding protein that interacts with newly synthesized monoglucosylated glycoproteins in the endoplasmic reticulum. It may act in assisting protein assembly and/or in the retention within the ER of unassembled protein subunits. It seems to play a major role in the quality control apparatus of the ER by the retention of incorrectly folded proteins. The chain is Calnexin homolog 1 (CNX1) from Arabidopsis thaliana (Mouse-ear cress).